Reading from the N-terminus, the 215-residue chain is Large ribosomal subunit protein uL4 (215 aa).

The disordered stretch occupies residues 43–97 (RRQGTHSTKTRAEVSGGGKKPWRQKGTGRARAGSTRSPIWVGGGKTHTPKPRDYS).

It belongs to the universal ribosomal protein uL4 family. Part of the 50S ribosomal subunit.

Functionally, one of the primary rRNA binding proteins, this protein initially binds near the 5'-end of the 23S rRNA. It is important during the early stages of 50S assembly. It makes multiple contacts with different domains of the 23S rRNA in the assembled 50S subunit and ribosome. In terms of biological role, forms part of the polypeptide exit tunnel. In Brachyspira hyodysenteriae (strain ATCC 49526 / WA1), this protein is Large ribosomal subunit protein uL4.